We begin with the raw amino-acid sequence, 96 residues long: Small ribosomal subunit protein bS6 (96 aa).

It belongs to the bacterial ribosomal protein bS6 family.

Functionally, binds together with bS18 to 16S ribosomal RNA. This Corynebacterium aurimucosum (strain ATCC 700975 / DSM 44827 / CIP 107346 / CN-1) (Corynebacterium nigricans) protein is Small ribosomal subunit protein bS6.